Consider the following 93-residue polypeptide: Large ribosomal subunit protein bL27 (93 aa).

The protein belongs to the bacterial ribosomal protein bL27 family.

This chain is Large ribosomal subunit protein bL27, found in Trichormus variabilis (strain ATCC 29413 / PCC 7937) (Anabaena variabilis).